The sequence spans 211 residues: SAGA-associated factor 11 homolog 1 (211 aa).

Residues 115-136 form an SGF11-type zinc finger; sequence CTCPNCDRLVAAARFAPHLEKC. The segment at 149 to 211 is disordered; that stretch reads RRLATKEGSS…GSKKNNGKTF (63 aa). Residues 157–166 are compositionally biased toward low complexity; sequence SSASTSSTST. The residue at position 187 (serine 187) is a Phosphoserine. Over residues 197–211 the composition is skewed to low complexity; the sequence is SSRNNGSKKNNGKTF.

It belongs to the SGF11 family. As to quaternary structure, component of some SAGA transcription coactivator-HAT complexes, at least composed of Ada2b, not/nonstop, Pcaf/Gcn5, Sgf11 and Spt3. Within the SAGA complex, Sgf11, e(y)2, and not/nonstop form an additional subcomplex of SAGA called the DUB module (deubiquitination module). Interacts directly with not/nonstop. Interacts with the AMEX complex component xmas-2. Interacts with Cbp80; important for promoter recruitment of Sgf11 that is not associated with the DUB module.

It is found in the nucleus. It localises to the nucleoplasm. The protein localises to the cytoplasm. Component of the transcription regulatory histone acetylation (HAT) complex SAGA, a multiprotein complex that activates transcription by remodeling chromatin and mediating histone acetylation and deubiquitination. Within the SAGA complex, participates in a subcomplex that specifically deubiquitinates histone H2B. The SAGA complex is recruited to specific gene promoters by activators, where it is required for transcription. Required for nuclear receptor-mediated transactivation. Binds independently on SAGA to promoters in an RNA-dependent manner. Binds to mRNA and is essential for total mRNA export from the nucleus. Required to counteract heterochromatin silencing. Controls the development of neuronal connectivity in visual system by being required for accurate axon targeting in the optic lobe. Required for expression of ecdysone-induced genes such as br/broad. The protein is SAGA-associated factor 11 homolog 1 of Drosophila grimshawi (Hawaiian fruit fly).